Consider the following 165-residue polypeptide: Large ribosomal subunit protein uL10 (165 aa).

The protein belongs to the universal ribosomal protein uL10 family. As to quaternary structure, part of the ribosomal stalk of the 50S ribosomal subunit. The N-terminus interacts with L11 and the large rRNA to form the base of the stalk. The C-terminus forms an elongated spine to which L12 dimers bind in a sequential fashion forming a multimeric L10(L12)X complex.

Functionally, forms part of the ribosomal stalk, playing a central role in the interaction of the ribosome with GTP-bound translation factors. The sequence is that of Large ribosomal subunit protein uL10 from Deinococcus deserti (strain DSM 17065 / CIP 109153 / LMG 22923 / VCD115).